The chain runs to 1222 residues: Chitin synthase 4 (1222 aa).

The disordered stretch occupies residues 1 to 108 (MSLPERPGGI…NRIDKDHPNY (108 aa)). Positions 51–68 (LSANSFAETIPSPNNSFV) are enriched in polar residues. N-linked (GlcNAc...) asparagine glycosylation is present at Asn-64. Positions 94-107 (IRPERNRIDKDHPN) are enriched in basic and acidic residues. N-linked (GlcNAc...) asparagine glycosylation occurs at Asn-116. Residues 136-199 (TTDVSGSRSQ…KSTKKRSTPQ (64 aa)) form a disordered region. Positions 137–154 (TDVSGSRSQTLDGVSDTS) are enriched in polar residues. The span at 176–196 (SAKRVSRHKSGKITKSTKKRS) shows a compositional bias: basic residues. 2 helical membrane passes run 204–224 (PPSF…DFML) and 242–262 (MGLI…TFGF). Residues Asn-378 and Asn-418 are each glycosylated (N-linked (GlcNAc...) asparagine). A helical membrane pass occupies residues 509–529 (YVFLALILSVVGSRFVLALIF). A disordered region spans residues 595 to 662 (RFSTVYGPDR…PPSDGPGPAG (68 aa)). The span at 608–643 (NKRVPTTMASSGGSGSQLLHPNSMYRQGNDSRSSFL) shows a compositional bias: polar residues. N-linked (GlcNAc...) asparagine glycosylation is found at Asn-636 and Asn-1031. A run of 3 helical transmembrane segments spans residues 1056–1076 (FIVF…AFTF), 1090–1110 (VIPL…IVIT), and 1116–1136 (YLVW…VLPV). Positions 1201–1222 (GGGNSWSMPPGHQYHDDYYSDA) are disordered. Residues 1213 to 1222 (QYHDDYYSDA) are compositionally biased toward basic and acidic residues.

Belongs to the chitin synthase family. Class IV subfamily.

The protein localises to the cell membrane. It catalyses the reaction [(1-&gt;4)-N-acetyl-beta-D-glucosaminyl](n) + UDP-N-acetyl-alpha-D-glucosamine = [(1-&gt;4)-N-acetyl-beta-D-glucosaminyl](n+1) + UDP + H(+). In terms of biological role, polymerizes chitin, a structural polymer of the cell wall and septum, by transferring the sugar moiety of UDP-GlcNAc to the non-reducing end of the growing chitin polymer. Plays a role in cell wall integrity and is involved in tolerance to hyperosmotic conditions. Required to successfully penetrate the host plants and thus plays a key role in pathogenicity. The sequence is that of Chitin synthase 4 from Verticillium dahliae (strain VdLs.17 / ATCC MYA-4575 / FGSC 10137) (Verticillium wilt).